The following is a 364-amino-acid chain: Palmitoyltransferase ZDHHC9 (364 aa).

Residues 1–35 lie on the Cytoplasmic side of the membrane; that stretch reads MSVMVVRKKVTRKWEKLPGRNTFCCDGRVMMARQK. The chain crosses the membrane as a helical span at residues 36–56; that stretch reads GIFYLTLFLILGTCTLFFAFE. At 57–63 the chain is on the lumenal side; sequence CRYLAVQ. The chain crosses the membrane as a helical span at residues 64-84; sequence LSPAIPVFAAMLFLFSMATLL. Over 85–183 the chain is Cytoplasmic; that stretch reads RTSFSDPGVI…NCVGKRNYRY (99 aa). Positions 139-189 constitute a DHHC domain; the sequence is KYCYTCKIFRPPRASHCSICDNCVERFDHHCPWVGNCVGKRNYRYFYLFIL. C169 functions as the S-palmitoyl cysteine intermediate in the catalytic mechanism. The helical transmembrane segment at 184-204 threads the bilayer; the sequence is FYLFILSLSLLTIYVFAFNIV. The Lumenal portion of the chain corresponds to 205 to 228; it reads YVALKSLKIGFLETLKETPGTVLE. Residues 229–249 form a helical membrane-spanning segment; sequence VLICFFTLWSVVGLTGFHTFL. Residues 250 to 364 are Cytoplasmic-facing; it reads VALNQTTNED…PPQEASEAEK (115 aa). The disordered stretch occupies residues 303 to 364; the sequence is PLEESGSRPP…PPQEASEAEK (62 aa). Residues 310–336 show a composition bias toward polar residues; the sequence is RPPSTQETSSSLLPQSPASTEHMNSNE. Residues 346 to 356 show a composition bias toward pro residues; that stretch reads EMPPPEPPEPP.

The protein belongs to the DHHC palmitoyltransferase family. ERF2/ZDHHC9 subfamily. As to quaternary structure, interacts with GOLGA7.

Its subcellular location is the endoplasmic reticulum membrane. The protein localises to the golgi apparatus membrane. It catalyses the reaction L-cysteinyl-[protein] + hexadecanoyl-CoA = S-hexadecanoyl-L-cysteinyl-[protein] + CoA. In terms of biological role, palmitoyltransferase that catalyzes the addition of palmitate onto various protein substrates, such as ADRB2, GSDMD, HRAS, NRAS and CGAS. The ZDHHC9-GOLGA7 complex is a palmitoyltransferase specific for HRAS and NRAS. May have a palmitoyltransferase activity toward the beta-2 adrenergic receptor/ADRB2 and therefore regulate G protein-coupled receptor signaling. Acts as a regulator of innate immunity by catalyzing palmitoylation of CGAS, thereby promoting CGAS homodimerization and cyclic GMP-AMP synthase activity. Activates pyroptosis by catalyzing palmitoylation of gasdermin-D (GSDMD), thereby promoting membrane translocation and pore formation of GSDMD. The chain is Palmitoyltransferase ZDHHC9 (Zdhhc9) from Mus musculus (Mouse).